A 228-amino-acid polypeptide reads, in one-letter code: DNA mismatch repair protein MutH (228 aa).

The protein belongs to the MutH family.

The protein resides in the cytoplasm. Functionally, sequence-specific endonuclease that cleaves unmethylated GATC sequences. It is involved in DNA mismatch repair. The chain is DNA mismatch repair protein MutH from Serratia proteamaculans (strain 568).